An 81-amino-acid chain; its full sequence is Antimicrobial peptide D1 (81 aa).

The first 31 residues, 1-31, serve as a signal peptide directing secretion; it reads MAKTVLGIHVTFLTLLFAVLLLNDVMYTPVE. Cystine bridges form between Cys-34-Cys-81, Cys-45-Cys-66, Cys-51-Cys-75, and Cys-55-Cys-77.

Antimicrobial peptide probably active against fungi like B.sorokiniana, F.oxysporum, F.graminearum, F.avenaceum, B.cinerea, P.beta, P.infestans and P.debaryanum. The chain is Antimicrobial peptide D1 from Stellaria media (Common chickweed).